A 357-amino-acid chain; its full sequence is Major outer membrane protein P.IB (357 aa).

An N-terminal signal peptide occupies residues 1–19; the sequence is MKKSLIALTLAALPVAAMA.

Belongs to the Gram-negative porin family. As to quaternary structure, homotrimer.

Its subcellular location is the cell outer membrane. Its function is as follows. Serves as a slightly cation selective porin. The chain is Major outer membrane protein P.IB (por) from Neisseria sicca.